The chain runs to 136 residues: Small ribosomal subunit protein uS12 (136 aa).

The disordered stretch occupies residues M1 to P28. The residue at position 89 (D89) is a 3-methylthioaspartic acid. The interval T101–R136 is disordered. Over residues G113–K123 the composition is skewed to basic residues.

This sequence belongs to the universal ribosomal protein uS12 family. In terms of assembly, part of the 30S ribosomal subunit. Contacts proteins S8 and S17. May interact with IF1 in the 30S initiation complex.

Its function is as follows. With S4 and S5 plays an important role in translational accuracy. Interacts with and stabilizes bases of the 16S rRNA that are involved in tRNA selection in the A site and with the mRNA backbone. Located at the interface of the 30S and 50S subunits, it traverses the body of the 30S subunit contacting proteins on the other side and probably holding the rRNA structure together. The combined cluster of proteins S8, S12 and S17 appears to hold together the shoulder and platform of the 30S subunit. The polypeptide is Small ribosomal subunit protein uS12 (Cyanothece sp. (strain PCC 7425 / ATCC 29141)).